Consider the following 224-residue polypeptide: MKNIEKLEQSLTYEFKDKNLLIHALTHKSFKKSYNNERLEFLGDAVLDLVVGEYLFHKFAKDAEGDLSKLRAALVNEKSFAKIANSLNLGDFILMSVAEENNGGKEKPSILSDALEAIIGAIHLEAGFEFAKTIALRLIEKNFPQIDAKILIKDYKTKLQEITQGKIGQTPQYETVRAFGPDHLKQFEIALMLDGKELARAIAGSKKEAQQMAAKIALEKLGAL.

In terms of domain architecture, RNase III spans 4 to 127 (IEKLEQSLTY…IIGAIHLEAG (124 aa)). Glutamate 40 serves as a coordination point for Mg(2+). Aspartate 44 is an active-site residue. Residues aspartate 113 and glutamate 116 each contribute to the Mg(2+) site. The active site involves glutamate 116. One can recognise a DRBM domain in the interval 154–223 (DYKTKLQEIT…AKIALEKLGA (70 aa)).

The protein belongs to the ribonuclease III family. In terms of assembly, homodimer. The cofactor is Mg(2+).

The protein localises to the cytoplasm. It carries out the reaction Endonucleolytic cleavage to 5'-phosphomonoester.. Digests double-stranded RNA. Involved in the processing of primary rRNA transcript to yield the immediate precursors to the large and small rRNAs (23S and 16S). Also processes some mRNAs, and tRNAs when they are encoded in the rRNA operon. Its function is as follows. CRISPR (clustered regularly interspaced short palindromic repeat) is an adaptive immune system that provides protection against mobile genetic elements (viruses, transposable elements and conjugative plasmids). CRISPR clusters contain spacers, sequences complementary to antecedent mobile elements, and target invading nucleic acids. CRISPR clusters are transcribed and processed into CRISPR RNA (crRNA). In this organism endogenous ribonuclease 3 and Cas9 are required for correct coprocessing of pre-crRNA and the trans-encoded small RNA (tracrRNA). Cas9, crRNA and tracrRNA are required for cleavage of invading DNA. Complements pre-crRNA and tracrRNA coprocessing defects in an rnc deletion in S.pyogenes strain 370. This is Ribonuclease 3 from Campylobacter jejuni subsp. jejuni serotype O:2 (strain ATCC 700819 / NCTC 11168).